A 252-amino-acid chain; its full sequence is 2-succinyl-6-hydroxy-2,4-cyclohexadiene-1-carboxylate synthase (252 aa).

The protein belongs to the AB hydrolase superfamily. MenH family. In terms of assembly, monomer.

The catalysed reaction is 5-enolpyruvoyl-6-hydroxy-2-succinyl-cyclohex-3-ene-1-carboxylate = (1R,6R)-6-hydroxy-2-succinyl-cyclohexa-2,4-diene-1-carboxylate + pyruvate. Its pathway is quinol/quinone metabolism; 1,4-dihydroxy-2-naphthoate biosynthesis; 1,4-dihydroxy-2-naphthoate from chorismate: step 3/7. It functions in the pathway quinol/quinone metabolism; menaquinone biosynthesis. Catalyzes a proton abstraction reaction that results in 2,5-elimination of pyruvate from 2-succinyl-5-enolpyruvyl-6-hydroxy-3-cyclohexene-1-carboxylate (SEPHCHC) and the formation of 2-succinyl-6-hydroxy-2,4-cyclohexadiene-1-carboxylate (SHCHC). This is 2-succinyl-6-hydroxy-2,4-cyclohexadiene-1-carboxylate synthase from Salmonella typhimurium (strain LT2 / SGSC1412 / ATCC 700720).